Here is a 231-residue protein sequence, read N- to C-terminus: Lipoprotein-releasing system ATP-binding protein LolD (231 aa).

The region spanning 6–230 is the ABC transporter domain; sequence LSCKNVSKKY…DGELELVINS (225 aa). An ATP-binding site is contributed by 42 to 49; that stretch reads GLSGSGKT.

This sequence belongs to the ABC transporter superfamily. Lipoprotein translocase (TC 3.A.1.125) family. As to quaternary structure, the complex is composed of two ATP-binding proteins (LolD) and two transmembrane proteins (LolC and LolE).

Its subcellular location is the cell inner membrane. In terms of biological role, part of the ABC transporter complex LolCDE involved in the translocation of mature outer membrane-directed lipoproteins, from the inner membrane to the periplasmic chaperone, LolA. Responsible for the formation of the LolA-lipoprotein complex in an ATP-dependent manner. The protein is Lipoprotein-releasing system ATP-binding protein LolD of Francisella tularensis subsp. holarctica (strain OSU18).